Here is a 1042-residue protein sequence, read N- to C-terminus: MPGIVVFRRRWSVGSDDLVLPAIFLFLLHTTWFVILSVVLFGLVYNPHEACSLNLVDHGRGYLGILLSCMIAEMAIIWLSMRGGILYTEPRDSMQYVLYVRLAILVIEFIYAIVGIVWLTQYYTSCNDLTAKNVTLGMVVCNWVVILSVCITVLCVFDPTGRTFVKLRATKRRQRNLRTYNLRHRLEEGQATSWSRRLKVFLCCTRTKDSQSDAYSEIAYLFAEFFRDLDIVPSDIIAGLVLLRQRQRAKRNAVLDEANNDILAFLSGMPVTRNTKYLDLKNSQEMLRYKEVCYYMLFALAAYGWPMYLMRKPACGLCQLARSCSCCLCPARPRFAPGVTIEEDNCCGCNAIAIRRHFLDENMTAVDIVYTSCHDAVYETPFYVAVDHDKKKVVISIRGTLSPKDALTDLTGDAERLPVEGHHGTWLGHKGMVLSAEYIKKKLEQEMVLSQAFGRDLGRGTKHYGLIVVGHSLGAGTAAILSFLLRPQYPTLKCFAYSPPGGLLSEDAMEYSKEFVTAVVLGKDLVPRIGLSQLEGFRRQLLDVLQRSTKPKWRIIVGATKCIPKSELPEEVEVTTLASTRLWTHPSDLTIALSASTPLYPPGRIIHVVHNHPAEQCCCCEQEEPTYFAIWGDNKAFNEVIISPAMLHEHLPYVVMEGLNKVLENYNKGKTALLSAAKVMVSPTEVDLTPELIFQQQPLPTGPPMPTGLALELPTADHRNSSVRSKSQSEMSLEGFSEGRLLSPVVAAAARQDPVELLLLSTQERLAAELQARRAPLATMESLSDTESLYSFDSRRSSGFRSIRGSPSLHAVLERDEGHLFYIDPAIPEENPSLSSRTELLAADSLSKHSQDTQPLEAALGSGGVTPERPPSAAANDEEEEVGGGGGGPASRGELALHNGRLGDSPSPQVLEFAEFIDSLFNLDSKSSSFQDLYCMVVPESPTSDYAEGPKSPSQQEILLRAQFEPNLVPKPPRLFAGSADPSSGISLSPSFPLSSSGELMDLTPTGLSSQECLAADKIRTSTPTGHGASPAKQDELVISAR.

Residues 1–22 are Cytoplasmic-facing; that stretch reads MPGIVVFRRRWSVGSDDLVLPA. A helical transmembrane segment spans residues 23–43; it reads IFLFLLHTTWFVILSVVLFGL. Residues 44 to 60 lie on the Extracellular side of the membrane; the sequence is VYNPHEACSLNLVDHGR. A helical membrane pass occupies residues 61 to 81; it reads GYLGILLSCMIAEMAIIWLSM. Over 82-101 the chain is Cytoplasmic; sequence RGGILYTEPRDSMQYVLYVR. Residues 102–122 traverse the membrane as a helical segment; sequence LAILVIEFIYAIVGIVWLTQY. The Extracellular portion of the chain corresponds to 123 to 136; that stretch reads YTSCNDLTAKNVTL. A glycan (N-linked (GlcNAc...) asparagine) is linked at asparagine 133. Residues 137–157 traverse the membrane as a helical segment; it reads GMVVCNWVVILSVCITVLCVF. The Cytoplasmic portion of the chain corresponds to 158-1042; that stretch reads DPTGRTFVKL…KQDELVISAR (885 aa). Active-site charge relay system residues include serine 472 and aspartate 524. A phosphoserine mark is found at serine 727, serine 729, serine 732, serine 743, serine 782, serine 784, serine 806, serine 808, serine 833, serine 847, and serine 952. Residues 846-903 are disordered; sequence LSKHSQDTQPLEAALGSGGVTPERPPSAAANDEEEEVGGGGGGPASRGELALHNGRLG. A disordered region spans residues 1014 to 1042; sequence LAADKIRTSTPTGHGASPAKQDELVISAR. At threonine 1023 the chain carries Phosphothreonine.

Belongs to the AB hydrolase superfamily. Lipase family. Interacts (via C-terminal) with CAMK2A; leading to the phosphorylation and inhibition of DAGLA enzymatic activity. Interacts (via PPXXF motif) with HOMER1 and HOMER2; this interaction is required for DAGLA membrane localization. Ca(2+) serves as cofactor. Phosphorylated at Ser-782 and Ser-808 by CAMK2A; phosphorylation by CAMK2A inhibits diacylglycerol lipase activity. As to expression, highly expressed in brain and pancreas.

Its subcellular location is the cell membrane. It is found in the postsynaptic density membrane. The protein localises to the early endosome membrane. It localises to the cell projection. The protein resides in the dendritic spine membrane. It catalyses the reaction a 1,2-diacyl-sn-glycerol + H2O = a 2-acylglycerol + a fatty acid + H(+). The enzyme catalyses 1-octadecanoyl-2-(5Z,8Z,11Z,14Z-eicosatetraenoyl)-sn-glycerol + H2O = 2-(5Z,8Z,11Z,14Z-eicosatetraenoyl)-glycerol + octadecanoate + H(+). It carries out the reaction 1,2-di-(9Z-octadecenoyl)-sn-glycerol + H2O = 2-(9Z-octadecenoyl)-glycerol + (9Z)-octadecenoate + H(+). The catalysed reaction is 1-(9Z-octadecenoyl)-2-(5Z,8Z,11Z,14Z-eicosatetraenoyl)-sn-glycerol + H2O = 2-(5Z,8Z,11Z,14Z-eicosatetraenoyl)-glycerol + (9Z)-octadecenoate + H(+). It catalyses the reaction 1-(9Z-octadecenoyl)-2-octadecanoyl-sn-glycerol + H2O = 2-octadecanoylglycerol + (9Z)-octadecenoate + H(+). The enzyme catalyses 1-(9Z-octadecenoyl)-2-(9Z,12Z-octadecadienoyl)-sn-glycerol + H2O = 2-(9Z,12Z-octadecadienoyl)-glycerol + (9Z)-octadecenoate + H(+). It carries out the reaction 1-(9Z-octadecenoyl)-2-O-(5Z,8Z,11Z,14Z-eicosatetraenyl)-sn-glycerol + H2O = 2-O-(5Z,8Z,11Z,14Z)-eicosatetraenylglycerol + (9Z)-octadecenoate + H(+). Inhibited by 1,2,3-triazole urea covalent inhibitors KT172, DH376 and DO34. Inhibited by p-hydroxy-mercuri-benzoate and HgCl(2), but not to PMSF. Also inhibited by RHC80267. Diacylglycerol lipase activity is inhibited by the phosphorylation of Ser-782 and Ser-808 by CAMK2A. Serine hydrolase that hydrolyzes arachidonic acid-esterified diacylglycerols (DAGs) to produce the principal endocannabinoid, 2-arachidonoylglycerol (2-AG). Preferentially hydrolyzes sn-1 fatty acids from diacylglycerols (DAG) that contain arachidonic acid (AA) esterified at the sn-2 position to biosynthesize 2-AG. Has negligible activity against other lipids including monoacylglycerols and phospholipids. Plays a key role in regulating 2-AG signaling in the central nervous system (CNS). Regulates 2-AG involved in retrograde suppression at central synapses. Supports axonal growth during development and adult neurogenesis. Plays a role for eCB signaling in the physiological regulation of anxiety and depressive behaviors. Also regulates neuroinflammatory responses in the brain, in particular, LPS-induced microglial activation. The chain is Diacylglycerol lipase-alpha (DAGLA) from Homo sapiens (Human).